The following is a 303-amino-acid chain: Quinolinate synthase (303 aa).

Positions 25 and 42 each coordinate iminosuccinate. Cys-87 serves as a coordination point for [4Fe-4S] cluster. Residues 113–115 (YVN) and Ser-130 contribute to the iminosuccinate site. Cys-174 serves as a coordination point for [4Fe-4S] cluster. Iminosuccinate contacts are provided by residues 200-202 (HPE) and Thr-217. Cys-260 serves as a coordination point for [4Fe-4S] cluster.

This sequence belongs to the quinolinate synthase family. Type 2 subfamily. Homodimer. Requires [4Fe-4S] cluster as cofactor.

The protein resides in the cytoplasm. It carries out the reaction iminosuccinate + dihydroxyacetone phosphate = quinolinate + phosphate + 2 H2O + H(+). The protein operates within cofactor biosynthesis; NAD(+) biosynthesis; quinolinate from iminoaspartate: step 1/1. In terms of biological role, catalyzes the condensation of iminoaspartate with dihydroxyacetone phosphate to form quinolinate. This Pyrococcus furiosus (strain ATCC 43587 / DSM 3638 / JCM 8422 / Vc1) protein is Quinolinate synthase.